The primary structure comprises 199 residues: Probable GTP-binding protein EngB (199 aa).

Positions 24 to 197 (EGYEVIFAGR…GARLNTFFGY (174 aa)) constitute an EngB-type G domain. GTP-binding positions include 32–39 (GRSNAGKS), 59–63 (GKTQH), 77–80 (DLPG), 144–147 (TKSD), and 176–178 (FSS). The Mg(2+) site is built by S39 and T61.

It belongs to the TRAFAC class TrmE-Era-EngA-EngB-Septin-like GTPase superfamily. EngB GTPase family. Mg(2+) is required as a cofactor.

Its function is as follows. Necessary for normal cell division and for the maintenance of normal septation. The polypeptide is Probable GTP-binding protein EngB (Ruthia magnifica subsp. Calyptogena magnifica).